The sequence spans 197 residues: RNA polymerase sigma GP34 factor (197 aa).

Functionally, sigma factors are initiation factors that promote the attachment of RNA polymerase to specific initiation sites and are then released. In Bacillus subtilis (Bacteriophage SP01), this protein is RNA polymerase sigma GP34 factor (34).